We begin with the raw amino-acid sequence, 367 residues long: MRTSFVTMLALGAAAVSAAPAAPVTDLVERGSSCTFTTAEAAKAGKGSCSTIVLDNIKVPAGETLDLTKLKSGTQVVFKGETSFGYKEWTGPLVSFSGSNIHVSGAAGHVINGGGPSWWDGKGTNGGKKKPKFFYAHHLDDSTISGLNVKNTPVQGFSILADRLTLDHITIDNSEGDAKGGHNTDAFDVGSSTFITISNANIKNQDDCLAINSGSNIKFVGGTCSGGHGISIGSVGLRDNNIVKDVTISDSTVINSDNGVRVKTIYQATGAVSGVTFSNIKLSNIAKYGIVIEQDYENGSPTGKPTNGVPISELTIENVTGTLKSSATEVYILCGNGSCKNWKWAGNSLSGGKKSGKCGNVPAGASC.

Positions 1 to 18 are cleaved as a signal peptide; the sequence is MRTSFVTMLALGAAAVSA. A disulfide bridge links Cys-34 with Cys-49. 5 PbH1 repeats span residues 161 to 191, 192 to 213, 214 to 234, 243 to 264, and 272 to 294; these read ADRL…DVGS, STFI…AINS, GSNI…SIGS, VKDV…RVKT, and VSGV…VIEQ. The active-site Proton donor is Asp-206. Cysteines 208 and 224 form a disulfide. Residue His-228 is part of the active site. N-linked (GlcNAc...) asparagine glycosylation is found at Asn-318 and Asn-336. 2 disulfide bridges follow: Cys-334–Cys-339 and Cys-358–Cys-367.

It belongs to the glycosyl hydrolase 28 family.

The protein localises to the secreted. The catalysed reaction is (1,4-alpha-D-galacturonosyl)n+m + H2O = (1,4-alpha-D-galacturonosyl)n + (1,4-alpha-D-galacturonosyl)m.. This chain is Polygalacturonase (PG1), found in Penicillium digitatum (Green mold).